We begin with the raw amino-acid sequence, 126 residues long: C2H2-type zinc-finger transcription factor M5 (126 aa).

2 disordered regions span residues 17 to 52 and 103 to 126; these read AQPD…NDNR and EKKS…RVKD. Positions 38–48 are enriched in polar residues; that stretch reads SNGSSSGTATD. Residues 51–76 form a C2H2-type 1; degenerate zinc finger; it reads NRCWDHGCNGKKFLNHSNLVRHRREN. The C2H2-type 2; degenerate zinc-finger motif lies at 83-115; it reads FTCPMCGAYFSRSTARNQHLEKKSCNRVRRYSN. Residues 115–126 are compositionally biased toward basic and acidic residues; sequence NGRERPRPRVKD.

It belongs to the GLI C2H2-type zinc-finger protein family.

Its subcellular location is the nucleus. In terms of biological role, transcription factor that probably regulates the expression of the gene cluster that mediates the biosynthesis of squalestatin S1 (SQS1, also known as zaragozic acid A), a heavily oxidized fungal polyketide that offers potent cholesterol lowering activity by targeting squalene synthase (SS). The chain is C2H2-type zinc-finger transcription factor M5 from Phoma sp. (strain ATCC 20986 / MF5453).